A 551-amino-acid polypeptide reads, in one-letter code: Cytochrome c oxidase subunit 1 (551 aa).

Residues 29–49 (VIGIQYLVTSFLFFFIGGSFA) form a helical membrane-spanning segment. A Fe(II)-heme a-binding site is contributed by His76. The next 11 helical transmembrane spans lie at 79-99 (IMIFLWIVPAGAAFANYLIPL), 113-133 (AVAFWLTPPGGILLISSFFVG), 156-176 (LWILSLLLVGTSSILGAINFV), 205-225 (LILLSTPVLASALILLSFDLI), 245-265 (LFWFYSHPAVYIMILPFFGVI), 283-303 (IAYSSLAISFLGLIVWAHHMF), 313-333 (MFFMATTMLIAVPTGIKIFSW), 348-368 (MLFAFGFLSSFMIGGLTGVMV), 382-402 (FVVGHFHYVLFGGSAFALFSG), 424-444 (FILTFIGMNLTFMPMHELGLM), and 466-486 (IGAYVLAASTIPFVINVFWSL). Residues His251, Tyr255, His300, and His301 each coordinate Cu cation. Residues 251–255 (HPAVY) constitute a cross-link (1'-histidyl-3'-tyrosine (His-Tyr)). His386 lines the heme a3 pocket. His388 is a binding site for Fe(II)-heme a.

The protein belongs to the heme-copper respiratory oxidase family. Requires Cu(2+) as cofactor. It depends on heme as a cofactor.

The protein localises to the cell membrane. The catalysed reaction is 4 Fe(II)-[cytochrome c] + O2 + 8 H(+)(in) = 4 Fe(III)-[cytochrome c] + 2 H2O + 4 H(+)(out). The protein operates within energy metabolism; oxidative phosphorylation. Cytochrome c oxidase is the component of the respiratory chain that catalyzes the reduction of oxygen to water. Subunits 1-3 form the functional core of the enzyme complex. CO I is the catalytic subunit of the enzyme. Electrons originating in cytochrome c are transferred via the copper A center of subunit 2 and heme A of subunit 1 to the bimetallic center formed by heme A3 and copper B. The chain is Cytochrome c oxidase subunit 1 (ctaD) from Synechocystis sp. (strain ATCC 27184 / PCC 6803 / Kazusa).